The chain runs to 165 residues: RxLR effector protein PITG_09218 (165 aa).

Residues 1–24 (MRFSAFLTLLLVAFVASCSTFASA) form the signal peptide. The RxLR-dEER signature appears at 31–57 (RRLRADAAPVPVNKDNVAKLAGGFLEK). Residues 129–149 (VTLGATVAGFAIYGAYKALFD) form a helical membrane-spanning segment.

It belongs to the RxLR effector family.

It localises to the secreted. The protein resides in the host mitochondrion membrane. The protein localises to the host endoplasmic reticulum membrane. In terms of biological role, effector that enhances P.infestans colonization of Nicotiana benthamiana leaves. This chain is RxLR effector protein PITG_09218, found in Phytophthora infestans (strain T30-4) (Potato late blight agent).